Consider the following 1070-residue polypeptide: DNA-directed RNA polymerase subunit beta (1070 aa).

This sequence belongs to the RNA polymerase beta chain family. In terms of assembly, in plastids the minimal PEP RNA polymerase catalytic core is composed of four subunits: alpha, beta, beta', and beta''. When a (nuclear-encoded) sigma factor is associated with the core the holoenzyme is formed, which can initiate transcription.

The protein resides in the plastid. The protein localises to the chloroplast. It catalyses the reaction RNA(n) + a ribonucleoside 5'-triphosphate = RNA(n+1) + diphosphate. In terms of biological role, DNA-dependent RNA polymerase catalyzes the transcription of DNA into RNA using the four ribonucleoside triphosphates as substrates. In Nandina domestica (Heavenly bamboo), this protein is DNA-directed RNA polymerase subunit beta.